Here is a 294-residue protein sequence, read N- to C-terminus: Putative S-adenosyl-L-methionine-dependent methyltransferase RHA1_ro00605 (294 aa).

Residues Asp-120 and 149–150 (DL) contribute to the S-adenosyl-L-methionine site.

It belongs to the UPF0677 family.

Its function is as follows. Exhibits S-adenosyl-L-methionine-dependent methyltransferase activity. This chain is Putative S-adenosyl-L-methionine-dependent methyltransferase RHA1_ro00605, found in Rhodococcus jostii (strain RHA1).